The sequence spans 542 residues: CTP synthase (542 aa).

The amidoligase domain stretch occupies residues 1 to 265 (MARYVFITGG…DSEVLSAFGI (265 aa)). Ser13 contributes to the CTP binding site. Ser13 lines the UTP pocket. 14–19 (SLGKGI) is a binding site for ATP. Tyr54 is an L-glutamine binding site. Asp71 lines the ATP pocket. Mg(2+)-binding residues include Asp71 and Glu139. Residues 146–148 (DIE), 186–191 (KTKPTQ), and Lys222 each bind CTP. Residues 186 to 191 (KTKPTQ) and Lys222 contribute to the UTP site. Residues 291–541 (TIAVVGKYTG…IEAAIEQSRL (251 aa)) form the Glutamine amidotransferase type-1 domain. Gly353 contacts L-glutamine. Cys380 functions as the Nucleophile; for glutamine hydrolysis in the catalytic mechanism. L-glutamine contacts are provided by residues 381-384 (FGMQ), Glu404, and Arg469. Residues His514 and Glu516 contribute to the active site.

Belongs to the CTP synthase family. In terms of assembly, homotetramer.

It carries out the reaction UTP + L-glutamine + ATP + H2O = CTP + L-glutamate + ADP + phosphate + 2 H(+). It catalyses the reaction L-glutamine + H2O = L-glutamate + NH4(+). The catalysed reaction is UTP + NH4(+) + ATP = CTP + ADP + phosphate + 2 H(+). The protein operates within pyrimidine metabolism; CTP biosynthesis via de novo pathway; CTP from UDP: step 2/2. With respect to regulation, allosterically activated by GTP, when glutamine is the substrate; GTP has no effect on the reaction when ammonia is the substrate. The allosteric effector GTP functions by stabilizing the protein conformation that binds the tetrahedral intermediate(s) formed during glutamine hydrolysis. Inhibited by the product CTP, via allosteric rather than competitive inhibition. Functionally, catalyzes the ATP-dependent amination of UTP to CTP with either L-glutamine or ammonia as the source of nitrogen. Regulates intracellular CTP levels through interactions with the four ribonucleotide triphosphates. The sequence is that of CTP synthase from Brucella abortus (strain 2308).